The sequence spans 777 residues: MPKTNRAQPGRLSSRFWRLLGASTEKNRSRSLTLVTDSSEYDDEAAGLTDEQLRKAAGLLNLEDLAESEDIPQFLAIAREAAERATGLRPFDVQLLGALRMLAGDVIEMATGEGKTLAGAIAAAGYALAGRHVHVVTINDYLARRDAEWMGPLIEAMGLTVGWITAESSSEERRAAYGCDVTYASVNEIGFDVLRDQLVTDVADLVSPNPDVALIDEADSVLVDEALVPLVLAGTTHRETPRLEIIKLVGELEAGTDYDTDADSRNVHLTDVGARKVEKALGGIDLYSEEHVGTTLTEVNVALHAHVLLQRDVHYIVRDDAVHLINASRGRIAQLQRWPDGLQAAVEAKEGIETTETGEVLDTITVQALINRYATVCGMTGTALAAGEQLRQFYKLGVSPIPPNKPNIREDEADRVYITAAAKNDAIVEHIIEVHETGQPVLVGTRDVAESEELHERLLRRGVPAVVLNAKNDAEEAQVIAEAGKFGVVTVSTQMAGRGTDIRLGGSDEADHDRVAELGGLHVVGTGRHHTERLDNQLRGRAGRQGDPGSSVFFSSWEDDVVAANLDRNKLPMETDPETGDGRIVSPKAAGLLDHAQRVAEGRMLDVHANTWRYNQLIAQQRAIIVDRRNTLLRTATAREELAELAPKRYRELAEEIPEERLETICRHIMLYHLDRGWADHLAYLADIRESIHLRALGRQNPLDEFHRLAVDAFASLAADAIEAAQQTFETANVLEDEPGLDLSKLARPTSTWTYMVNDNPLSDDTLSTLSLPGVFR.

ATP-binding positions include glutamine 94, 112–116 (GEGKT), and aspartate 501.

It belongs to the SecA family. In terms of assembly, monomer and homodimer. Part of the essential Sec protein translocation apparatus which comprises SecA, SecYEG and auxiliary proteins SecDF. Other proteins may also be involved.

It localises to the cell membrane. The protein resides in the cytoplasm. The catalysed reaction is ATP + H2O + cellular proteinSide 1 = ADP + phosphate + cellular proteinSide 2.. Its function is as follows. Part of the Sec protein translocase complex. Interacts with the SecYEG preprotein conducting channel. Has a central role in coupling the hydrolysis of ATP to the transfer of proteins into and across the cell membrane, serving as an ATP-driven molecular motor driving the stepwise translocation of polypeptide chains across the membrane. This chain is Protein translocase subunit SecA, found in Mycobacterium avium (strain 104).